A 542-amino-acid polypeptide reads, in one-letter code: Protein phosphatase 1G (542 aa).

Glycine 2 is lipidated: N-myristoyl glycine. The residue at position 22 (arginine 22) is an Omega-N-methylarginine. Residues 26–502 (PYGFSAMQGW…DNMTCIIICF (477 aa)) form the PPM-type phosphatase domain. 2 residues coordinate Mn(2+): aspartate 60 and glycine 61. 2 disordered regions span residues 118 to 139 (AGRP…DVDN) and 162 to 325 (QNCQ…SDSG). A Phosphothreonine modification is found at threonine 122. 2 stretches are compositionally biased toward acidic residues: residues 123-139 (EDED…DVDN) and 259-309 (DSED…DEEM). Position 380 is an N6-acetyllysine (lysine 380). Mn(2+) contacts are provided by aspartate 438 and aspartate 493. The tract at residues 510–542 (LQPESGKRKLEEALSTEGAEENGNSDKKKAKRD) is disordered. Residue serine 524 is modified to Phosphoserine.

It belongs to the PP2C family. In terms of assembly, interacts with NOL3; may dephosphorylate NOL3. It depends on Mg(2+) as a cofactor. Requires Mn(2+) as cofactor.

The protein resides in the cytoplasm. It is found in the membrane. The enzyme catalyses O-phospho-L-seryl-[protein] + H2O = L-seryl-[protein] + phosphate. The catalysed reaction is O-phospho-L-threonyl-[protein] + H2O = L-threonyl-[protein] + phosphate. This Rattus norvegicus (Rat) protein is Protein phosphatase 1G.